Here is a 99-residue protein sequence, read N- to C-terminus: Nucleoid-associated protein SZO_16661 (99 aa).

Belongs to the YbaB/EbfC family. As to quaternary structure, homodimer.

The protein resides in the cytoplasm. It is found in the nucleoid. In terms of biological role, binds to DNA and alters its conformation. May be involved in regulation of gene expression, nucleoid organization and DNA protection. The protein is Nucleoid-associated protein SZO_16661 of Streptococcus equi subsp. zooepidemicus (strain H70).